Reading from the N-terminus, the 227-residue chain is Cytidylate kinase (227 aa).

10–18 contributes to the ATP binding site; that stretch reads GPASSGKST.

This sequence belongs to the cytidylate kinase family. Type 1 subfamily.

The protein localises to the cytoplasm. The enzyme catalyses CMP + ATP = CDP + ADP. It carries out the reaction dCMP + ATP = dCDP + ADP. The protein is Cytidylate kinase of Streptococcus agalactiae serotype III (strain NEM316).